The primary structure comprises 720 residues: Polyribonucleotide nucleotidyltransferase (720 aa).

Mg(2+) is bound by residues Asp487 and Asp493. Residues Pro554–Ile613 enclose the KH domain. One can recognise an S1 motif domain in the interval Gly623 to Lys691. A disordered region spans residues Ala692–Glu720. Residues Leu701 to Glu720 show a composition bias toward basic and acidic residues.

This sequence belongs to the polyribonucleotide nucleotidyltransferase family. Mg(2+) is required as a cofactor.

The protein resides in the cytoplasm. The catalysed reaction is RNA(n+1) + phosphate = RNA(n) + a ribonucleoside 5'-diphosphate. Functionally, involved in mRNA degradation. Catalyzes the phosphorolysis of single-stranded polyribonucleotides processively in the 3'- to 5'-direction. The polypeptide is Polyribonucleotide nucleotidyltransferase (Bradyrhizobium sp. (strain BTAi1 / ATCC BAA-1182)).